The sequence spans 312 residues: Ribosomal protein L11 methyltransferase (312 aa).

The S-adenosyl-L-methionine site is built by T162, G183, D205, and N248.

It belongs to the methyltransferase superfamily. PrmA family.

It is found in the cytoplasm. The catalysed reaction is L-lysyl-[protein] + 3 S-adenosyl-L-methionine = N(6),N(6),N(6)-trimethyl-L-lysyl-[protein] + 3 S-adenosyl-L-homocysteine + 3 H(+). In terms of biological role, methylates ribosomal protein L11. This Bacillus cereus (strain ATCC 10987 / NRS 248) protein is Ribosomal protein L11 methyltransferase.